We begin with the raw amino-acid sequence, 311 residues long: Malate dehydrogenase (311 aa).

NAD(+) is bound by residues 7 to 13 and D34; that span reads GAAGGIG. Residues R81 and R87 each contribute to the substrate site. NAD(+) contacts are provided by residues N94 and 117–119; that span reads ITN. Substrate-binding residues include N119 and R153. H177 acts as the Proton acceptor in catalysis. Position 227 (M227) interacts with NAD(+).

The protein belongs to the LDH/MDH superfamily. MDH type 1 family. Homodimer.

The enzyme catalyses (S)-malate + NAD(+) = oxaloacetate + NADH + H(+). Functionally, catalyzes the reversible oxidation of malate to oxaloacetate. This chain is Malate dehydrogenase, found in Shewanella denitrificans (strain OS217 / ATCC BAA-1090 / DSM 15013).